A 440-amino-acid polypeptide reads, in one-letter code: Light-independent protochlorophyllide reductase subunit N (440 aa).

Residues Cys-15, Cys-40, and Cys-99 each contribute to the [4Fe-4S] cluster site.

This sequence belongs to the BchN/ChlN family. Protochlorophyllide reductase is composed of three subunits; BchL, BchN and BchB. Forms a heterotetramer of two BchB and two BchN subunits. The cofactor is [4Fe-4S] cluster.

It carries out the reaction chlorophyllide a + oxidized 2[4Fe-4S]-[ferredoxin] + 2 ADP + 2 phosphate = protochlorophyllide a + reduced 2[4Fe-4S]-[ferredoxin] + 2 ATP + 2 H2O. Its pathway is porphyrin-containing compound metabolism; bacteriochlorophyll biosynthesis (light-independent). In terms of biological role, component of the dark-operative protochlorophyllide reductase (DPOR) that uses Mg-ATP and reduced ferredoxin to reduce ring D of protochlorophyllide (Pchlide) to form chlorophyllide a (Chlide). This reaction is light-independent. The NB-protein (BchN-BchB) is the catalytic component of the complex. This is Light-independent protochlorophyllide reductase subunit N from Heliobacterium mobile (Heliobacillus mobilis).